The chain runs to 154 residues: Endoribonuclease YbeY (154 aa).

Residues His120, His124, and His130 each contribute to the Zn(2+) site.

It belongs to the endoribonuclease YbeY family. Zn(2+) is required as a cofactor.

It is found in the cytoplasm. Single strand-specific metallo-endoribonuclease involved in late-stage 70S ribosome quality control and in maturation of the 3' terminus of the 16S rRNA. The polypeptide is Endoribonuclease YbeY (Leptospira biflexa serovar Patoc (strain Patoc 1 / Ames)).